The following is a 212-amino-acid chain: General odorant-binding protein 68 (212 aa).

The first 28 residues, 1 to 28 (MATTIARIGSANWAKLLVLLWLVQLATA), serve as a signal peptide directing secretion. 3 disulfide bridges follow: cysteine 64/cysteine 85, cysteine 80/cysteine 152, and cysteine 130/cysteine 162.

The protein belongs to the PBP/GOBP family.

The protein resides in the secreted. In terms of biological role, present in the aqueous fluid surrounding olfactory sensory dendrites and are thought to aid in the capture and transport of hydrophobic odorants into and through this fluid. The polypeptide is General odorant-binding protein 68 (Obp68) (Anopheles gambiae (African malaria mosquito)).